The following is a 152-amino-acid chain: UPF0178 protein Shewmr7_1635 (152 aa).

Belongs to the UPF0178 family.

The protein is UPF0178 protein Shewmr7_1635 of Shewanella sp. (strain MR-7).